The following is a 568-amino-acid chain: 2-succinyl-5-enolpyruvyl-6-hydroxy-3-cyclohexene-1-carboxylate synthase (568 aa).

The protein belongs to the TPP enzyme family. MenD subfamily. Homodimer. Requires Mg(2+) as cofactor. The cofactor is Mn(2+). It depends on thiamine diphosphate as a cofactor.

The catalysed reaction is isochorismate + 2-oxoglutarate + H(+) = 5-enolpyruvoyl-6-hydroxy-2-succinyl-cyclohex-3-ene-1-carboxylate + CO2. It functions in the pathway quinol/quinone metabolism; 1,4-dihydroxy-2-naphthoate biosynthesis; 1,4-dihydroxy-2-naphthoate from chorismate: step 2/7. Its pathway is quinol/quinone metabolism; menaquinone biosynthesis. Functionally, catalyzes the thiamine diphosphate-dependent decarboxylation of 2-oxoglutarate and the subsequent addition of the resulting succinic semialdehyde-thiamine pyrophosphate anion to isochorismate to yield 2-succinyl-5-enolpyruvyl-6-hydroxy-3-cyclohexene-1-carboxylate (SEPHCHC). The polypeptide is 2-succinyl-5-enolpyruvyl-6-hydroxy-3-cyclohexene-1-carboxylate synthase (Histophilus somni (strain 129Pt) (Haemophilus somnus)).